The sequence spans 1083 residues: Protein HOS4 (1083 aa).

Disordered stretches follow at residues 1-233 (MNET…RKLV) and 267-328 (SSLF…YRDS). 2 positions are modified to phosphoserine: Ser-14 and Ser-16. Over residues 24–62 (TRREELEKISKQETSEEEDTAGKHEQRETLSEEVSDKFP) the composition is skewed to basic and acidic residues. Position 37 is a phosphothreonine (Thr-37). Ser-67 is subject to Phosphoserine. Polar residues predominate over residues 67 to 85 (SFRSQTTSVHQATQNNLNA). The span at 86–118 (KESEDLAHKNDASSHEGEVNGDSRPDDVPETNE) shows a compositional bias: basic and acidic residues. A compositionally biased stretch (polar residues) spans 135–149 (PNVRNVDIQNHQPFS). Residues 151 to 166 (DQLRAMLKEPKRKTVD) are compositionally biased toward basic and acidic residues. Over residues 167-185 (DFIEEEGLGAVEEEDLSDE) the composition is skewed to acidic residues. Basic and acidic residues predominate over residues 186-207 (VLEKNTTEPENVEKDIEYSDSD). Positions 277-293 (VKETNNNLSNMNSSPAQ) are enriched in polar residues. A Phosphoserine modification is found at Ser-290. The span at 300 to 310 (VSRSNDSNKSS) shows a compositional bias: low complexity. The segment covering 314–323 (VSKRPKQKKG) has biased composition (basic residues). ANK repeat units follow at residues 329–359 (GGRTRLQIACDKGKYDVVKKMIEEGGYDIND), 363–392 (AGNTALHEAALQGHIEIVELLIENGADVNI), and 398–427 (FGDTPLIDASANGHLDVVKYLLKNGADPTI). The interval 472-516 (AGIHNDKSKNGNNAHTIDQPPFDNTTKAKNEKAADSPSMASNIDE) is disordered. Residues 481 to 496 (NGNNAHTIDQPPFDNT) show a composition bias toward polar residues. At Ser-507 the chain carries Phosphoserine. 2 ANK repeats span residues 532–561 (AGKEKLFKASKEGHLPYVGTYVENGGKIDL) and 593–622 (NKTSALMVAVGRGHLGTVKLLLEAGADPTK). Disordered regions lie at residues 661–742 (HSED…DDNE) and 762–790 (DEEKLKSISPLSMEPHSPKKAKSVEISKI). Acidic residues predominate over residues 665 to 675 (NNDDDDDDDNN). Ser-698 is modified (phosphoserine). Thr-700 carries the post-translational modification Phosphothreonine. Over residues 721 to 740 (NNDRDVKESTTSDSRKRLDD) the composition is skewed to basic and acidic residues. Ser-778 is subject to Phosphoserine.

In terms of assembly, identified in the Set3C complex with HOS2, HST1, SNT1, SIF2, CPR1 and SET3.

Its function is as follows. Unknown. Component of the Set3C complex, which is required to repress early/middle sporulation genes during meiosis. The protein is Protein HOS4 (HOS4) of Saccharomyces cerevisiae (strain ATCC 204508 / S288c) (Baker's yeast).